Here is a 234-residue protein sequence, read N- to C-terminus: MSTKSMIRDVELAEEVLSEKAGGPQGSRSCLCLSLFSFLLVAGATTLFCLLHFGVIGPQREEQSPAGPSINSPPVQTLRSSSQASSNKPVAHVVADINSPGQLRWWDSYANALMANGVKLKDNQLVVPADGLYLIYSQVLFRDQGCPSTPLFLTHTISRIAVSYQTKVNILSAIKSPCHRETPEWAEAKPWYEPIYQGGVFQLEKGDRLSAEINLPDYLDYAESGQVYFGIIAL.

At 1 to 33 the chain is on the cytoplasmic side; it reads MSTKSMIRDVELAEEVLSEKAGGPQGSRSCLCL. The residue at position 2 (serine 2) is a Phosphoserine; by CK1. Residue lysine 20 is the site of N6-myristoyl lysine attachment. The helical; Signal-anchor for type II membrane protein transmembrane segment at 34-56 threads the bilayer; the sequence is SLFSFLLVAGATTLFCLLHFGVI. At 57–234 the chain is on the extracellular side; that stretch reads GPQREEQSPA…GQVYFGIIAL (178 aa). A disordered region spans residues 62–87; the sequence is EQSPAGPSINSPPVQTLRSSSQASSN. Polar residues predominate over residues 69 to 87; the sequence is SINSPPVQTLRSSSQASSN. O-linked (GalNAc...) serine; in soluble form glycosylation is present at serine 81. Residues 89–234 form the THD domain; that stretch reads PVAHVVADIN…GQVYFGIIAL (146 aa). Cysteine 146 and cysteine 178 are joined by a disulfide.

It belongs to the tumor necrosis factor family. Homotrimer. Interacts with SPPL2B. The soluble form derives from the membrane form by proteolytic processing. The membrane-bound form is further proteolytically processed by SPPL2A or SPPL2B through regulated intramembrane proteolysis producing TNF intracellular domains (ICD1 and ICD2) released in the cytosol and TNF C-domain 1 and C-domain 2 secreted into the extracellular space. In terms of processing, the membrane form, but not the soluble form, is phosphorylated on serine residues. Dephosphorylation of the membrane form occurs by binding to soluble TNFRSF1A/TNFR1. Post-translationally, O-glycosylated; glycans contain galactose, N-acetylgalactosamine and N-acetylneuraminic acid. The soluble form is demyristoylated by SIRT6, promoting its secretion.

It localises to the cell membrane. The protein localises to the membrane. Its subcellular location is the secreted. In terms of biological role, cytokine that binds to TNFRSF1A/TNFR1 and TNFRSF1B/TNFBR. It is mainly secreted by macrophages and can induce cell death of certain tumor cell lines. It is potent pyrogen causing fever by direct action or by stimulation of interleukin-1 secretion and is implicated in the induction of cachexia, Under certain conditions it can stimulate cell proliferation and induce cell differentiation. Induces insulin resistance in adipocytes via inhibition of insulin-induced IRS1 tyrosine phosphorylation and insulin-induced glucose uptake. Induces GKAP42 protein degradation in adipocytes which is partially responsible for TNF-induced insulin resistance. Plays a role in angiogenesis by inducing VEGF production synergistically with IL1B and IL6. Promotes osteoclastogenesis and therefore mediates bone resorption. Functionally, the TNF intracellular domain (ICD) form induces IL12 production in dendritic cells. In Boselaphus tragocamelus (Nilgai), this protein is Tumor necrosis factor (TNF).